The sequence spans 55 residues: uncharacterized protein (55 aa).

A signal peptide spans 1-19 (MQILLVVRLVLLWLGGLSA).

This is an uncharacterized protein from Orgyia pseudotsugata multicapsid polyhedrosis virus (OpMNPV).